Reading from the N-terminus, the 88-residue chain is Small ribosomal subunit protein uS15 (88 aa).

The protein belongs to the universal ribosomal protein uS15 family. Part of the 30S ribosomal subunit. Forms a bridge to the 50S subunit in the 70S ribosome, contacting the 23S rRNA.

In terms of biological role, one of the primary rRNA binding proteins, it binds directly to 16S rRNA where it helps nucleate assembly of the platform of the 30S subunit by binding and bridging several RNA helices of the 16S rRNA. Functionally, forms an intersubunit bridge (bridge B4) with the 23S rRNA of the 50S subunit in the ribosome. This Geotalea uraniireducens (strain Rf4) (Geobacter uraniireducens) protein is Small ribosomal subunit protein uS15.